A 57-amino-acid chain; its full sequence is UPF0391 membrane protein bsl6560 (57 aa).

2 helical membrane-spanning segments follow: residues Trp4–Ala24 and Ile30–Leu50.

It belongs to the UPF0391 family.

The protein localises to the cell membrane. The chain is UPF0391 membrane protein bsl6560 from Bradyrhizobium diazoefficiens (strain JCM 10833 / BCRC 13528 / IAM 13628 / NBRC 14792 / USDA 110).